Consider the following 890-residue polypeptide: Translation initiation factor IF-2 (890 aa).

Residues 45-304 (LIDHLNQKNS…LQQGFQKPAQ (260 aa)) form a disordered region. The segment covering 67–81 (STLNIPGTGGKSKSV) has biased composition (polar residues). Basic and acidic residues predominate over residues 92–217 (VKRDPQEAER…RMAEENKWTD (126 aa)). The segment covering 252–266 (GRGRNAKAARPKKGN) has biased composition (basic residues). Over residues 267–280 (KHAESKADREEARA) the composition is skewed to basic and acidic residues. The 170-residue stretch at 389-558 (PRAPVVTIMG…LLQAEVLELK (170 aa)) folds into the tr-type G domain. The G1 stretch occupies residues 398 to 405 (GHVDHGKT). Residue 398-405 (GHVDHGKT) participates in GTP binding. A G2 region spans residues 423–427 (GITQH). A G3 region spans residues 444-447 (DTPG). GTP contacts are provided by residues 444–448 (DTPGH) and 498–501 (NKID). The segment at 498–501 (NKID) is G4. Residues 534–536 (SAK) are G5. The residue at position 808 (lysine 808) is an N6-acetyllysine.

It belongs to the TRAFAC class translation factor GTPase superfamily. Classic translation factor GTPase family. IF-2 subfamily.

The protein localises to the cytoplasm. Functionally, one of the essential components for the initiation of protein synthesis. Protects formylmethionyl-tRNA from spontaneous hydrolysis and promotes its binding to the 30S ribosomal subunits. Also involved in the hydrolysis of GTP during the formation of the 70S ribosomal complex. The sequence is that of Translation initiation factor IF-2 from Escherichia coli O127:H6 (strain E2348/69 / EPEC).